The following is a 38-amino-acid chain: Photosystem II reaction center protein L (38 aa).

Residues 17-37 (SLYWGLLLIXVLAVLFSNYFF) traverse the membrane as a helical segment.

The protein belongs to the PsbL family. PSII is composed of 1 copy each of membrane proteins PsbA, PsbB, PsbC, PsbD, PsbE, PsbF, PsbH, PsbI, PsbJ, PsbK, PsbL, PsbM, PsbT, PsbX, PsbY, PsbZ, Psb30/Ycf12, at least 3 peripheral proteins of the oxygen-evolving complex and a large number of cofactors. It forms dimeric complexes.

The protein resides in the plastid. It is found in the chloroplast thylakoid membrane. In terms of biological role, one of the components of the core complex of photosystem II (PSII). PSII is a light-driven water:plastoquinone oxidoreductase that uses light energy to abstract electrons from H(2)O, generating O(2) and a proton gradient subsequently used for ATP formation. It consists of a core antenna complex that captures photons, and an electron transfer chain that converts photonic excitation into a charge separation. This subunit is found at the monomer-monomer interface and is required for correct PSII assembly and/or dimerization. This Allium textile (Textile onion) protein is Photosystem II reaction center protein L.